Consider the following 251-residue polypeptide: CDP-diacylglycerol pyrophosphatase (251 aa).

Residues 4-24 (AGLLFLVMIVIAVVAAGIGYW) form a helical membrane-spanning segment.

The protein belongs to the Cdh family.

It localises to the cell inner membrane. It carries out the reaction a CDP-1,2-diacyl-sn-glycerol + H2O = a 1,2-diacyl-sn-glycero-3-phosphate + CMP + 2 H(+). It participates in phospholipid metabolism; CDP-diacylglycerol degradation; phosphatidate from CDP-diacylglycerol: step 1/1. The sequence is that of CDP-diacylglycerol pyrophosphatase from Escherichia coli O81 (strain ED1a).